A 370-amino-acid chain; its full sequence is Peridinin-chlorophyll a-binding protein 1, chloroplastic (370 aa).

The N-terminal 57 residues, 1–57 (MVRSGKKAVVLAAVAFCATSVVQKSHGFVPSPLRQRAAAAGAAAASAATMFAPAAFA), are a transit peptide targeting the chloroplast. 2 tandem repeats follow at residues 58–220 (DEIG…VPSG) and 221–370 (DKIG…AAQR).

In terms of assembly, homotrimer.

The protein resides in the plastid. It is found in the chloroplast. Water-soluble antenna for capture of solar energy in the blue-green range. Peridinin is an asymmetric carotenoid. In Amphidinium carterae (Dinoflagellate), this protein is Peridinin-chlorophyll a-binding protein 1, chloroplastic.